We begin with the raw amino-acid sequence, 400 residues long: 3-phenylpropionate/cinnamic acid dioxygenase ferredoxin--NAD(+) reductase component (400 aa).

5-36 (TIIIVGGGQAAAMAAASLRQQGFTGELHLFSD) is a binding site for FAD. Residue 146 to 174 (SVVIVGAGTIGLELAASATQRGCKVTVIE) participates in NAD(+) binding.

The protein belongs to the bacterial ring-hydroxylating dioxygenase ferredoxin reductase family. As to quaternary structure, this dioxygenase system consists of four proteins: the two subunits of the hydroxylase component (HcaE and HcaF), a ferredoxin (HcaC) and a ferredoxin reductase (HcaD). FAD is required as a cofactor.

The catalysed reaction is 2 reduced [2Fe-2S]-[ferredoxin] + NAD(+) + H(+) = 2 oxidized [2Fe-2S]-[ferredoxin] + NADH. The protein operates within aromatic compound metabolism; 3-phenylpropanoate degradation. Functionally, part of the multicomponent 3-phenylpropionate dioxygenase, that converts 3-phenylpropionic acid (PP) and cinnamic acid (CI) into 3-phenylpropionate-dihydrodiol (PP-dihydrodiol) and cinnamic acid-dihydrodiol (CI-dihydrodiol), respectively. This Escherichia coli (strain SMS-3-5 / SECEC) protein is 3-phenylpropionate/cinnamic acid dioxygenase ferredoxin--NAD(+) reductase component.